The chain runs to 1386 residues: DNA-directed RNA polymerase subunit beta'' (1386 aa).

Residues Cys-224, Cys-294, Cys-301, and Cys-304 each contribute to the Zn(2+) site.

Belongs to the RNA polymerase beta' chain family. RpoC2 subfamily. In terms of assembly, in plastids the minimal PEP RNA polymerase catalytic core is composed of four subunits: alpha, beta, beta', and beta''. When a (nuclear-encoded) sigma factor is associated with the core the holoenzyme is formed, which can initiate transcription. Zn(2+) serves as cofactor.

It localises to the plastid. The protein resides in the chloroplast. It catalyses the reaction RNA(n) + a ribonucleoside 5'-triphosphate = RNA(n+1) + diphosphate. Functionally, DNA-dependent RNA polymerase catalyzes the transcription of DNA into RNA using the four ribonucleoside triphosphates as substrates. The chain is DNA-directed RNA polymerase subunit beta'' from Acorus calamus (Sweet flag).